The following is a 604-amino-acid chain: Polycomb group protein EMF2B (604 aa).

The C2H2-type zinc-finger motif lies at 310 to 331 (CPFCLVPCGSFKGLGCHLNASH). A disordered region spans residues 396 to 440 (PHIVDSGSPEDAQAGSEDDYVQRENGSSVAHASVDPANSLHGSNL). The segment at 454–589 (LSVERADPRN…DARAMNACNT (136 aa)) is VEFS-box.

It belongs to the VEFS (VRN2-EMF2-FIS2-SU(Z)12) family. Component of the polycomb repressive complex 2 (PRC2), composed of the core PRC2 components FIE2, EZ1 and CLF. PRC2 methylates 'Lys-27' residues of histone H3 (H3K27me3), leading to transcriptional repression of the affected target gene. Widely expressed.

In terms of biological role, polycomb group (PcG) protein. PcG proteins act by forming multiprotein complexes, which are required to maintain the transcriptionally repressive state of homeotic genes throughout development. PcG proteins are not required to initiate repression, but to maintain it during later stages of development. They act via the methylation of histones, rendering chromatin heritably changed in its expressibility. Polycomb group (PcG) protein involved in the repression of flowering under long day (LD) conditions. Regulates floret development. This Oryza sativa subsp. japonica (Rice) protein is Polycomb group protein EMF2B.